The sequence spans 110 residues: MLFQNISSHLKYLNQVGSTRIQLALANFFAISCLWLKPQICGKFQLLVPFREETSNGNCSKCPSMIHFLPLISLTFAFSIIVVSTGMSSKNSSDSLAVTPLLLGNKGKPQ.

2 consecutive transmembrane segments (helical) span residues 21 to 41 (IQLALANFFAISCLWLKPQIC) and 63 to 83 (PSMIHFLPLISLTFAFSIIVV).

It is found in the membrane. This is an uncharacterized protein from Saccharomyces cerevisiae (strain ATCC 204508 / S288c) (Baker's yeast).